A 589-amino-acid chain; its full sequence is Muscarinic acetylcholine receptor M3 (589 aa).

Topologically, residues 1–66 (MTLHSNSTTS…DPLGGHTIWQ (66 aa)) are extracellular. N-linked (GlcNAc...) asparagine glycosylation is found at asparagine 6, asparagine 15, asparagine 41, asparagine 48, and asparagine 52. Residues 67-90 (VVFIAFLTGFLALVTIIGNILVIV) form a helical membrane-spanning segment. Topologically, residues 91-103 (AFKVNKQLKTVNN) are cytoplasmic. Residues 104–129 (YFLLSLACADLIIGVISMNLFTTYII) form a helical membrane-spanning segment. Topologically, residues 130-141 (MNRWALGNLACD) are extracellular. Residues cysteine 140 and cysteine 220 are joined by a disulfide bond. The helical transmembrane segment at 142–163 (LWLSIDYVASNASVMNLLVISF) threads the bilayer. Residues 164-183 (DRYFSITRPLTYRAKRTTKR) lie on the Cytoplasmic side of the membrane. The chain crosses the membrane as a helical span at residues 184–205 (AGVMIGLAWVISFVLWAPAILF). The Extracellular segment spans residues 206–228 (WQYFVGKRTVPPGECFIQFLSEP). A helical membrane pass occupies residues 229-251 (TITFGTAIAAFYMPVTIMTILYW). Residues 252 to 490 (RIYKETEKRT…SLIKEKKAAQ (239 aa)) are Cytoplasmic-facing. The Basolateral sorting signal motif lies at 274-280 (AEAENFV). Disordered stretches follow at residues 275-295 (EAENFVHPTGSSRSCSSYELQ) and 323-356 (AEQMDQDHSSSDSWNNNDAAASLENSASSDEEDI). Positions 283–295 (TGSSRSCSSYELQ) are enriched in polar residues. The segment covering 333–344 (SDSWNNNDAAAS) has biased composition (low complexity). Serine 384 bears the Phosphoserine mark. The helical transmembrane segment at 491–513 (TLSAILLAFIITWTPYNIMVLVN) threads the bilayer. Over 514 to 525 (TFCDSCIPKTYW) the chain is Extracellular. A disulfide bridge links cysteine 516 with cysteine 519. Residues 526-545 (NLGYWLCYINSTVNPVCYAL) traverse the membrane as a helical segment. Residues 546–589 (CNKTFRTTFKMLLLCQCDKRKRRKQQYQQRQSVIFHKRVPEQAL) are Cytoplasmic-facing.

This sequence belongs to the G-protein coupled receptor 1 family. Muscarinic acetylcholine receptor subfamily. CHRM3 sub-subfamily. Homodimer; the dimers can form tetramers. Interacts with NALCN. Interacts with TMEM147. Expressed in cerebral cortex, submandibular gland, hypothalamus, pancreas, liver, and ileum.

Its subcellular location is the cell membrane. The protein resides in the postsynaptic cell membrane. It is found in the basolateral cell membrane. It localises to the endoplasmic reticulum membrane. Functionally, the muscarinic acetylcholine receptor mediates various cellular responses, including inhibition of adenylate cyclase, breakdown of phosphoinositides and modulation of potassium channels through the action of G proteins. Primary transducing effect is Pi turnover. The chain is Muscarinic acetylcholine receptor M3 (Chrm3) from Mus musculus (Mouse).